The sequence spans 338 residues: MTKKYNIAVIGATGNVGRETLNILAERHFPINKIYAIASNNSLGREVRFGAKILHINSLTIFNFYDIDIAFFCAGSNVSKEFIPKATADNCIVIDKTSLFRTDNQVPLIVPEANLSTLKEFNTKNIIANPNCIVIPLVVALKPLDNEIKIKRVVISTYQSVSGAGKAGMDELYDQTKSKYVFRENNPQKFPKQIAFNLFPHIGDFNKDGYTTEETKIAFELSKIMGTHFKTSVTSVRVPVFIGHAISVNIEFSNKIYAKDVEEILQDADGIVTISNNNDLAYISPIEVVGKDAVYVSRIRNDLSKENTINLWITCDNLRKGAALNSVQIAEELINNYL.

NADP(+) contacts are provided by residues 13–16 (TGNV) and 41–42 (NS). Arg-101 lines the phosphate pocket. Cys-132 (acyl-thioester intermediate) is an active-site residue. Gln-159 contacts substrate. Residues 162–163 (SG) and Pro-187 contribute to the NADP(+) site. Lys-216 contributes to the phosphate binding site. Arg-237 contacts substrate. The active-site Proton acceptor is His-244. Residue Asn-317 coordinates NADP(+).

Belongs to the aspartate-semialdehyde dehydrogenase family. As to quaternary structure, homodimer.

It catalyses the reaction L-aspartate 4-semialdehyde + phosphate + NADP(+) = 4-phospho-L-aspartate + NADPH + H(+). Its pathway is amino-acid biosynthesis; L-lysine biosynthesis via DAP pathway; (S)-tetrahydrodipicolinate from L-aspartate: step 2/4. The protein operates within amino-acid biosynthesis; L-methionine biosynthesis via de novo pathway; L-homoserine from L-aspartate: step 2/3. It participates in amino-acid biosynthesis; L-threonine biosynthesis; L-threonine from L-aspartate: step 2/5. Its function is as follows. Catalyzes the NADPH-dependent formation of L-aspartate-semialdehyde (L-ASA) by the reductive dephosphorylation of L-aspartyl-4-phosphate. This Rickettsia typhi (strain ATCC VR-144 / Wilmington) protein is Aspartate-semialdehyde dehydrogenase.